Reading from the N-terminus, the 111-residue chain is Large ribosomal subunit protein P1 (111 aa).

The span at serine 65 to alanine 89 shows a compositional bias: low complexity. The tract at residues serine 65–aspartate 111 is disordered.

Belongs to the eukaryotic ribosomal protein P1/P2 family. In terms of assembly, P1 and P2 exist as dimers at the large ribosomal subunit.

Its function is as follows. Plays an important role in the elongation step of protein synthesis. This chain is Large ribosomal subunit protein P1, found in Caenorhabditis elegans.